Consider the following 456-residue polypeptide: Trigger factor (456 aa).

In terms of domain architecture, PPIase FKBP-type spans G166–P245.

It belongs to the FKBP-type PPIase family. Tig subfamily.

Its subcellular location is the cytoplasm. The enzyme catalyses [protein]-peptidylproline (omega=180) = [protein]-peptidylproline (omega=0). Involved in protein export. Acts as a chaperone by maintaining the newly synthesized protein in an open conformation. Functions as a peptidyl-prolyl cis-trans isomerase. This chain is Trigger factor, found in Bifidobacterium adolescentis (strain ATCC 15703 / DSM 20083 / NCTC 11814 / E194a).